A 483-amino-acid chain; its full sequence is Rhamnulokinase (483 aa).

ATP is bound at residue 11-15 (ASSGR). Residues G79 and 234–236 (HDT) contribute to the substrate site. D235 (proton acceptor) is an active-site residue. T257 serves as a coordination point for ATP. Substrate is bound at residue N294. Q302 contributes to the ATP binding site. An intrachain disulfide couples C352 to C369. Residue G401 participates in ATP binding.

Belongs to the rhamnulokinase family. Mg(2+) serves as cofactor.

The enzyme catalyses L-rhamnulose + ATP = L-rhamnulose 1-phosphate + ADP + H(+). Its pathway is carbohydrate degradation; L-rhamnose degradation; glycerone phosphate from L-rhamnose: step 2/3. Involved in the catabolism of L-rhamnose (6-deoxy-L-mannose). Catalyzes the transfer of the gamma-phosphate group from ATP to the 1-hydroxyl group of L-rhamnulose to yield L-rhamnulose 1-phosphate. In Listeria monocytogenes serotype 4b (strain CLIP80459), this protein is Rhamnulokinase.